Consider the following 213-residue polypeptide: Cell division protein SepF 2 (213 aa).

The disordered stretch occupies residues 16–89; it reads EDDGYDGRGF…ASLAAESSRP (74 aa). Over residues 27-39 the composition is skewed to acidic residues; that stretch reads PDDDFEPELDPEP.

It belongs to the SepF family. As to quaternary structure, homodimer. Interacts with FtsZ.

Its subcellular location is the cytoplasm. Functionally, cell division protein that is part of the divisome complex and is recruited early to the Z-ring. Probably stimulates Z-ring formation, perhaps through the cross-linking of FtsZ protofilaments. Its function overlaps with FtsA. The protein is Cell division protein SepF 2 of Streptomyces coelicolor (strain ATCC BAA-471 / A3(2) / M145).